The primary structure comprises 355 residues: Aromatic amino acid aminotransferase (355 aa).

An N6-(pyridoxal phosphate)lysine modification is found at Lys-217.

It belongs to the class-II pyridoxal-phosphate-dependent aminotransferase family. Homodimer. Pyridoxal 5'-phosphate is required as a cofactor.

The enzyme catalyses an aromatic L-alpha-amino acid + 2-oxoglutarate = an aromatic oxo-acid + L-glutamate. Functionally, aminotransferase that catalyzes the conversion of aromatic amino acids and 2-oxoglutarate into corresponding aromatic oxo acids and L-glutamate. This is Aromatic amino acid aminotransferase from Mycobacterium avium (strain 104).